We begin with the raw amino-acid sequence, 141 residues long: Hemoglobin subunit alpha-D (141 aa).

Residues 1 to 141 (MLTAEDKKLI…VAAVLAGKYR (141 aa)) form the Globin domain. Histidine 58 and histidine 87 together coordinate heme b.

It belongs to the globin family. In terms of assembly, heterotetramer of two alpha-D chains and two beta chains. As to expression, red blood cells.

Its function is as follows. Involved in oxygen transport from the lung to the various peripheral tissues. The protein is Hemoglobin subunit alpha-D (HBAD) of Coturnix japonica (Japanese quail).